A 1288-amino-acid chain; its full sequence is Structural maintenance of chromosomes protein 4 (1288 aa).

Polar residues predominate over residues 1 to 10; the sequence is MPRKGTQPST. Positions 1–55 are disordered; the sequence is MPRKGTQPSTARRREEGPPPPSPDGASSDAEPEPPSGRTESPATAAETASEELDN. 2 positions are modified to phosphoserine: S22 and S28. At T39 the chain carries Phosphothreonine. The span at 39 to 48 shows a compositional bias: low complexity; that stretch reads TESPATAAET. Residues S41 and S50 each carry the phosphoserine modification. Residue 113 to 120 participates in ATP binding; sequence GPNGSGKS. S143 is modified (phosphoserine). The stretch at 272–588 forms a coiled coil; that stretch reads RRVEILNEHR…LFQKVEEAKS (317 aa). 2 positions are modified to N6-acetyllysine: K381 and K679. Positions 613–727 constitute an SMC hinge domain; it reads PGIYGRLGDL…ADNLDQATRV (115 aa). A coiled-coil region spans residues 767–1020; it reads LVIEISEEEV…ALSIKLKLEQ (254 aa). Phosphoserine occurs at positions 982 and 1056. The stretch at 1109–1129 forms a coiled coil; the sequence is ELDKITYERDSFRQAYEDLRK.

The protein belongs to the SMC family. SMC4 subfamily. In terms of assembly, forms a heterodimer with SMC2. Component of the condensin complex, which contains the SMC2 and SMC4 heterodimer, and three non SMC subunits that probably regulate the complex: BRRN1/CAPH, CNAP1/CAPD2 and CAPG. In terms of tissue distribution, widely expressed. Higher expression in testis, colon, thymus.

It localises to the nucleus. The protein localises to the cytoplasm. Its subcellular location is the chromosome. Its function is as follows. Central component of the condensin complex, a complex required for conversion of interphase chromatin into mitotic-like condense chromosomes. The condensin complex probably introduces positive supercoils into relaxed DNA in the presence of type I topoisomerases and converts nicked DNA into positive knotted forms in the presence of type II topoisomerases. The protein is Structural maintenance of chromosomes protein 4 (SMC4) of Homo sapiens (Human).